Here is a 260-residue protein sequence, read N- to C-terminus: Thrombin-like enzyme 1 (260 aa).

A signal peptide spans 1–18 (MVLITVLANLLILQLSYA). The propeptide occupies 19 to 24 (QKSSEL). Positions 25–251 (VIGGDECNIN…HLDWIQSIIA (227 aa)) constitute a Peptidase S1 domain. 6 disulfides stabilise this stretch: C31–C165, C52–C68, C102–C258, C144–C212, C176–C191, and C202–C227. Catalysis depends on H67, which acts as the Charge relay system. The N-linked (GlcNAc...) asparagine glycan is linked to N105. D112 acts as the Charge relay system in catalysis. N-linked (GlcNAc...) asparagine glycans are attached at residues N156 and N172. Catalysis depends on S206, which acts as the Charge relay system. An N-linked (GlcNAc...) asparagine glycan is attached at N253.

The protein belongs to the peptidase S1 family. Snake venom subfamily. Monomer. In terms of tissue distribution, expressed by the venom gland.

It localises to the secreted. Functionally, thrombin-like snake venom serine protease. In Trimeresurus albolabris (White-lipped pit viper), this protein is Thrombin-like enzyme 1.